A 264-amino-acid chain; its full sequence is MSNVRSDKPFTLAGRTFQSRLLVGTGKYRDMEETRLAIEASGAEIVTVAVRRTNLGQNPGEPNLLDVLPPDRYTILPNTAGCYDAVEAVRTCRLARELLDGHNLVKLEVLADQKTLFPNVIETLKAAEVLVKDGFDVMVYTSDDPIIARQLAEAGCIAVMPLAGLIGTGLGICNPYNLQIILEESKVPVLVDAGVGTASDATIAMEMGCEAVLMNSAIAHAQQPVLMAEAMKHAIVAGRMAYLAGRMPKKLYASASSPLDGLIK.

Lysine 106 serves as the catalytic Schiff-base intermediate with DXP. 1-deoxy-D-xylulose 5-phosphate-binding positions include glycine 167, 193–194 (AG), and 215–216 (NS).

It belongs to the ThiG family. In terms of assembly, homotetramer. Forms heterodimers with either ThiH or ThiS.

It localises to the cytoplasm. It catalyses the reaction [ThiS sulfur-carrier protein]-C-terminal-Gly-aminoethanethioate + 2-iminoacetate + 1-deoxy-D-xylulose 5-phosphate = [ThiS sulfur-carrier protein]-C-terminal Gly-Gly + 2-[(2R,5Z)-2-carboxy-4-methylthiazol-5(2H)-ylidene]ethyl phosphate + 2 H2O + H(+). The protein operates within cofactor biosynthesis; thiamine diphosphate biosynthesis. Catalyzes the rearrangement of 1-deoxy-D-xylulose 5-phosphate (DXP) to produce the thiazole phosphate moiety of thiamine. Sulfur is provided by the thiocarboxylate moiety of the carrier protein ThiS. In vitro, sulfur can be provided by H(2)S. The polypeptide is Thiazole synthase (Pseudomonas putida (strain W619)).